The chain runs to 348 residues: Selenide, water dikinase (348 aa).

Cys-17 is an active-site residue. ATP is bound by residues Lys-20 and 47-49 (THD). Asp-50 provides a ligand contact to Mg(2+). ATP-binding positions include Asp-67, Asp-90, and 138-140 (GHT). A Mg(2+)-binding site is contributed by Asp-90. Asp-226 provides a ligand contact to Mg(2+).

Belongs to the selenophosphate synthase 1 family. Class I subfamily. In terms of assembly, homodimer. Mg(2+) serves as cofactor.

The enzyme catalyses hydrogenselenide + ATP + H2O = selenophosphate + AMP + phosphate + 2 H(+). Functionally, synthesizes selenophosphate from selenide and ATP. The sequence is that of Selenide, water dikinase from Porphyromonas gingivalis (strain ATCC BAA-308 / W83).